Reading from the N-terminus, the 2701-residue chain is Centromere-associated protein E (2701 aa).

The Kinesin motor domain maps to 6-329; it reads AVAVCVRVRP…LQFASTAKYM (324 aa). 86-93 lines the ATP pocket; it reads GQTASGKT. Residues 336–2590 are a coiled coil; that stretch reads NEVSTDEALL…SNEVKTWKER (2255 aa). 2 positions are modified to phosphoserine: Ser611 and Ser2083. Residues 2126-2476 form a kinetochore-binding domain region; sequence KEIEFQKELS…IDLEKMKNAK (351 aa). Residues 2355–2376 form a disordered region; it reads SGAQVNPTTQDNKNPHVTSRAT. Phosphoserine is present on Ser2389. Over residues 2508–2527 the composition is skewed to polar residues; the sequence is QAQDTSVISEHTDPQPSNKP. Disordered stretches follow at residues 2508–2533 and 2588–2701; these read QAQDTSVISEHTDPQPSNKPLTCGGG and KERT…CKTQ. The segment at 2510-2698 is globular autoinhibitory domain; it reads QDTSVISEHT…ASSGKDVPEC (189 aa). Over residues 2588–2600 the composition is skewed to basic and acidic residues; it reads KERTLKREAHKQV. Residues 2601–2625 show a composition bias toward polar residues; that stretch reads TCENSPKSPKVTGTASKKKQITPSQ. Residues 2626–2640 show a composition bias toward basic and acidic residues; sequence CKERNLQDPVPKESP. Phosphoserine is present on residues Ser2639, Ser2647, and Ser2651. At Cys2698 the chain carries Cysteine methyl ester. Cys2698 carries the S-farnesyl cysteine lipid modification. The propeptide at 2699-2701 is removed in mature form; sequence KTQ.

It belongs to the TRAFAC class myosin-kinesin ATPase superfamily. Kinesin family. As to quaternary structure, monomer. Interacts with CENPF. Interacts with BUB1B. Interacts with SEPT7. Interacts with KIF18A. Interacts with PRC1. Interacts with NUF2; this interaction determines kinetochore localization. Interacts with SKAP; this interaction greatly favors SKAP binding to microtubules. Interacts with TRAPPC12. Interacts with CTCF. The C-terminal inhibitory domain is phosphorylated. Phosphorylation relieves autoinhibition of the kinetochore motor. Post-translationally, sumoylated with SUMO2 and SUMO3. The sumoylation mediates the association to the kinetochore.

It is found in the chromosome. Its subcellular location is the centromere. The protein localises to the kinetochore. The protein resides in the cytoplasm. It localises to the cytoskeleton. It is found in the spindle. Functionally, microtubule plus-end-directed kinetochore motor which plays an important role in chromosome congression, microtubule-kinetochore conjugation and spindle assembly checkpoint activation. Drives chromosome congression (alignment of chromosomes at the spindle equator resulting in the formation of the metaphase plate) by mediating the lateral sliding of polar chromosomes along spindle microtubules towards the spindle equator and by aiding the establishment and maintenance of connections between kinetochores and spindle microtubules. The transport of pole-proximal chromosomes towards the spindle equator is favored by microtubule tracks that are detyrosinated. Acts as a processive bi-directional tracker of dynamic microtubule tips; after chromosomes have congressed, continues to play an active role at kinetochores, enhancing their links with dynamic microtubule ends. Suppresses chromosome congression in NDC80-depleted cells and contributes positively to congression only when microtubules are stabilized. Plays an important role in the formation of stable attachments between kinetochores and spindle microtubules The stabilization of kinetochore-microtubule attachment also requires CENPE-dependent localization of other proteins to the kinetochore including BUB1B, MAD1 and MAD2. Plays a role in spindle assembly checkpoint activation (SAC) via its interaction with BUB1B resulting in the activation of its kinase activity, which is important for activating SAC. Necessary for the mitotic checkpoint signal at individual kinetochores to prevent aneuploidy due to single chromosome loss. In Homo sapiens (Human), this protein is Centromere-associated protein E (CENPE).